We begin with the raw amino-acid sequence, 513 residues long: Xylose import ATP-binding protein XylG (513 aa).

ABC transporter domains are found at residues 5–242 (LEMK…VERE) and 259–505 (LRIE…LRSE). ATP is bound at residue 37 to 44 (GENGSGKS).

Belongs to the ABC transporter superfamily. Xylose importer (TC 3.A.1.2.4) family. In terms of assembly, the complex is composed of two ATP-binding proteins (XylG), two transmembrane proteins (XylH) and a solute-binding protein (XylF).

Its subcellular location is the cell inner membrane. It catalyses the reaction D-xylose(out) + ATP + H2O = D-xylose(in) + ADP + phosphate + H(+). Its function is as follows. Part of the ABC transporter complex XylFGH involved in xylose import. Responsible for energy coupling to the transport system. In Shigella flexneri, this protein is Xylose import ATP-binding protein XylG.